We begin with the raw amino-acid sequence, 112 residues long: uncharacterized protein (112 aa).

The interval 91–112 is disordered; the sequence is ENQRKKGTRKRRSSEVDSKEKS. Residues 103-112 show a composition bias toward basic and acidic residues; the sequence is SSEVDSKEKS.

This is an uncharacterized protein from Caenorhabditis elegans.